Here is a 901-residue protein sequence, read N- to C-terminus: HTH-type transcriptional regulator MalT (901 aa).

Position 39-46 (39-46) interacts with ATP; it reads SPAGYGKT. One can recognise an HTH luxR-type domain in the interval 829-894; that stretch reads ELIRTSPLTQ…DAVQHAQQLL (66 aa). The H-T-H motif DNA-binding region spans 853–872; that stretch reads NEQIAGELAVAATTIKTHIR.

This sequence belongs to the MalT family. In terms of assembly, monomer in solution. Oligomerizes to an active state in the presence of the positive effectors ATP and maltotriose.

Activated by ATP and maltotriose, which are both required for DNA binding. In terms of biological role, positively regulates the transcription of the maltose regulon whose gene products are responsible for uptake and catabolism of malto-oligosaccharides. Specifically binds to the promoter region of its target genes, recognizing a short DNA motif called the MalT box. This Salmonella agona (strain SL483) protein is HTH-type transcriptional regulator MalT.